The chain runs to 442 residues: Histidinol dehydrogenase (442 aa).

NAD(+)-binding residues include Tyr-138, Gln-196, and Asn-219. The substrate site is built by Ser-245, Gln-267, and His-270. Residues Gln-267 and His-270 each contribute to the Zn(2+) site. Catalysis depends on proton acceptor residues Glu-334 and His-335. His-335, Asp-368, Glu-422, and His-427 together coordinate substrate. Position 368 (Asp-368) interacts with Zn(2+). Position 427 (His-427) interacts with Zn(2+).

It belongs to the histidinol dehydrogenase family. Homodimer. Zn(2+) serves as cofactor.

It catalyses the reaction L-histidinol + 2 NAD(+) + H2O = L-histidine + 2 NADH + 3 H(+). It participates in amino-acid biosynthesis; L-histidine biosynthesis; L-histidine from 5-phospho-alpha-D-ribose 1-diphosphate: step 9/9. Catalyzes the sequential NAD-dependent oxidations of L-histidinol to L-histidinaldehyde and then to L-histidine. In Pectobacterium atrosepticum (strain SCRI 1043 / ATCC BAA-672) (Erwinia carotovora subsp. atroseptica), this protein is Histidinol dehydrogenase.